The sequence spans 117 residues: Large ribosomal subunit protein uL18 (117 aa).

It belongs to the universal ribosomal protein uL18 family. In terms of assembly, part of the 50S ribosomal subunit; part of the 5S rRNA/L5/L18/L25 subcomplex. Contacts the 5S and 23S rRNAs.

Functionally, this is one of the proteins that bind and probably mediate the attachment of the 5S RNA into the large ribosomal subunit, where it forms part of the central protuberance. The sequence is that of Large ribosomal subunit protein uL18 from Enterobacter sp. (strain 638).